The sequence spans 536 residues: MYIMKLLIKEALEDALLKLNISRKVILTDAKDFGDFSSNIAMVLQKDLGKNPLEIAQMIVEKINKEKFLIEKIEIVKPGFINFFLDHKFYVYLLEKFSKNDFLIELEKTYTYNLEYVSANPTGFLHIGHARGAAIGDTLANILEFANNKVIREYYVNDAGNQISILAYALYIRYQQILGNKTLNLPEDSYHGEDIKYFAKIFHKKYQEKFKNVDYSLEVENFFKDEGVKIALEKIKLDLKTFRVEFDLYTSEKSIYPLIEKSLKKLKNTYEQDGALWLKTTDYGDDKDRVLIKNDGTYTYFAPDLAYHYVKKTRSENVDYLIDFFGADHIGYVKRMQIALEQFGFSKDTLNVLILEMVKLRKNGTEFVMSKRKGTAISLEDLIELIGVDNARFFLVDHSSSSKLDLEIDLIAEKNLSNGAFIIQYAYARTNSILEKTKVTLDVKLIRKPFDDKFEMKLVNVLKEFPILIEKIAENFKIHLLSQYLITLAKSFNSFYSNSKIIDSEEELKLILLVKATQAVLKKGLDLLKVEAPERI.

The short motif at 119–129 (ANPTGFLHIGH) is the 'HIGH' region element.

The protein belongs to the class-I aminoacyl-tRNA synthetase family. Monomer.

Its subcellular location is the cytoplasm. It catalyses the reaction tRNA(Arg) + L-arginine + ATP = L-arginyl-tRNA(Arg) + AMP + diphosphate. This Mycoplasma mobile (strain ATCC 43663 / 163K / NCTC 11711) (Mesomycoplasma mobile) protein is Arginine--tRNA ligase.